A 378-amino-acid chain; its full sequence is MAARAPVHLRGFIARVALNKKNLHARHKLDTDIDKYYYTLHNVIIPDFMDMVKEIPGYPERIKKCVAHTTPSYFEGWAFSTELIYKTVADKQHQTERNLEKCRIIRALMDMSYAMAGILDDYVDKGEFRRGKKVWASVCEGGQEAAIYDSIAVTYLMSLMVKRHFGTDPGYSKLIELFNMVPGTAAIGNTLDILDRHDTNYYDDTMWKHSVQNKAANTVFPAATAGLIHAGVLCDDLLDRTSEVFGYTGHLFQVWDDFMEHYAVKEQSGKGAPDTKYNAKTWATLTAMAHFNEAQAKEFKACYGSTDPAKRSRVRELYDEVNLRGLYIDYLRNTYMVVEEKISKIPDPRIQSACRSYMDWLLVEPPQDEEEAESVLNN.

2 residues coordinate Mg(2+): D120 and D124. The short motif at 120–124 (DDYVD) is the DDXXD motif element.

Belongs to the terpene synthase family. Mg(2+) is required as a cofactor. Highly expressed in male epidermal tissue associated with the cuticle of ventral sternites.

It catalyses the reaction (2Z,6E)-farnesyl diphosphate = (Z)-alpha-bisabolene + diphosphate. It functions in the pathway pheromone biosynthesis. In terms of biological role, sesquiterpene alcohol synthase that catalyzes the formation of the pheromone precursor (Z)-alpha-bisabolene from (2Z,6E)-farnesyl diphosphate. The sequence is that of IDS-type sesquiterpene synthase from Nezara viridula (Southern green stink bug).